A 286-amino-acid chain; its full sequence is 33 kDa chaperonin (286 aa).

2 disulfides stabilise this stretch: Cys-225–Cys-227 and Cys-258–Cys-261.

This sequence belongs to the HSP33 family. Post-translationally, under oxidizing conditions two disulfide bonds are formed involving the reactive cysteines. Under reducing conditions zinc is bound to the reactive cysteines and the protein is inactive.

It localises to the cytoplasm. Functionally, redox regulated molecular chaperone. Protects both thermally unfolding and oxidatively damaged proteins from irreversible aggregation. Plays an important role in the bacterial defense system toward oxidative stress. The chain is 33 kDa chaperonin from Shewanella frigidimarina (strain NCIMB 400).